Consider the following 943-residue polypeptide: Translation initiation factor IF-2 (943 aa).

The interval 30–357 (SVKSHSSSVE…KPVTERKFHE (328 aa)) is disordered. Basic and acidic residues-rich tracts occupy residues 69 to 82 (PKEE…DKAS), 112 to 137 (FKAE…DNRN), 145 to 155 (QGKRHNNDRRN), 163 to 196 (DHNK…RDNA), and 224 to 253 (RQSE…EKQQ). Low complexity predominate over residues 254–266 (VKVAVQKAAAETK). Positions 296-309 (KSRDNRRVNEDGPK) are enriched in basic and acidic residues. Positions 313–332 (NNKWNNQNQVRNQRNSNWNK) are enriched in low complexity. The tr-type G domain occupies 445–614 (ERAPVVTIMG…LLVAEVEELK (170 aa)). Residues 454-461 (GHVDHGKT) form a G1 region. 454–461 (GHVDHGKT) is a binding site for GTP. Residues 479–483 (GITQH) form a G2 region. The G3 stretch occupies residues 500–503 (DTPG). Residues 500-504 (DTPGH) and 554-557 (NKID) each bind GTP. A G4 region spans residues 554–557 (NKID). The segment at 590–592 (SAK) is G5.

It belongs to the TRAFAC class translation factor GTPase superfamily. Classic translation factor GTPase family. IF-2 subfamily.

It localises to the cytoplasm. Functionally, one of the essential components for the initiation of protein synthesis. Protects formylmethionyl-tRNA from spontaneous hydrolysis and promotes its binding to the 30S ribosomal subunits. Also involved in the hydrolysis of GTP during the formation of the 70S ribosomal complex. This Streptococcus thermophilus (strain ATCC BAA-250 / LMG 18311) protein is Translation initiation factor IF-2.